A 300-amino-acid chain; its full sequence is Probable ABC transporter permease protein YurM (300 aa).

6 helical membrane passes run 37 to 57 (VWVF…WMVM), 98 to 118 (VIVT…AAYG), 129 to 149 (FFLV…LVPL), 161 to 181 (TYWA…IILI), 204 to 224 (FGVF…TSGI), and 264 to 284 (WGVL…LFLL). An ABC transmembrane type-1 domain is found at 94–285 (FMNSVIVTAL…APIIILFLLM (192 aa)).

This sequence belongs to the binding-protein-dependent transport system permease family. MalFG subfamily.

The protein resides in the cell membrane. Its function is as follows. Probably part of the binding-protein-dependent transport system YurMNO. Probably responsible for the translocation of the substrate across the membrane. This chain is Probable ABC transporter permease protein YurM (yurM), found in Bacillus subtilis (strain 168).